A 269-amino-acid polypeptide reads, in one-letter code: CCAAT/enhancer-binding protein delta (269 aa).

Disordered regions lie at residues 1 to 48 (MSAA…PGAA), 97 to 133 (PLELLPGGPARPLGPGPAAPRLLKREPDWGDGDAPGS), and 151 to 219 (AAGQ…NQEM). S2 is modified (N-acetylserine). Low complexity-rich tracts occupy residues 36-48 (GAEPGALGEPGAA) and 97-107 (PLELLPGGPAR). K120 is covalently cross-linked (Glycyl lysine isopeptide (Lys-Gly) (interchain with G-Cter in SUMO)). Pro residues predominate over residues 155-175 (PTPPTSPEPPRSSPRQTPAPG). The segment covering 177–201 (AREKSAGKRGPDRGSPEYRQRRERN) has biased composition (basic and acidic residues). In terms of domain architecture, bZIP spans 191–254 (SPEYRQRRER…AGLRQFFKQL (64 aa)). The tract at residues 195-222 (RQRRERNNIAVRKSRDKAKRRNQEMQQK) is basic motif. The leucine-zipper stretch occupies residues 226–254 (LSAENEKLHQRVEQLTRDLAGLRQFFKQL).

The protein belongs to the bZIP family. C/EBP subfamily. Binds DNA as a homodimer and as a heterodimer. Can form stable heterodimers with CEBPB. Can form stable heterodimers with CEBPA and CEBPE. Directly interacts with SPI1/PU.1; this interaction does not affect DNA-binding properties of each partner. Interacts with PRDM16.

It is found in the nucleus. Its function is as follows. Transcription activator that recognizes two different DNA motifs: the CCAAT homology common to many promoters and the enhanced core homology common to many enhancers. Important transcription factor regulating the expression of genes involved in immune and inflammatory responses. Transcriptional activator that enhances IL6 transcription alone and as heterodimer with CEBPB. This is CCAAT/enhancer-binding protein delta (CEBPD) from Homo sapiens (Human).